A 201-amino-acid chain; its full sequence is MARYIGPKHKLCRRVGRPLCGSAKCPALKRPYRPGQHGPGRPQKLSEYGAQLLEKQKLRFIYGVMERQFRRYFEQAQRSRGVTGEVLLQLLEQRLDTVVYRLGFARTMAAARQLVGHGHVTLNGRRVDIASCQVKPGDVVGLTQKARSLAVVRESLDLRRPVPPYLSLDETTMTSRLQRLPLREEIPVDVDESLVVELYAR.

Residues 93 to 156 form the S4 RNA-binding domain; that stretch reads QRLDTVVYRL…RSLAVVRESL (64 aa).

The protein belongs to the universal ribosomal protein uS4 family. Part of the 30S ribosomal subunit. Contacts protein S5. The interaction surface between S4 and S5 is involved in control of translational fidelity.

Functionally, one of the primary rRNA binding proteins, it binds directly to 16S rRNA where it nucleates assembly of the body of the 30S subunit. In terms of biological role, with S5 and S12 plays an important role in translational accuracy. This chain is Small ribosomal subunit protein uS4B, found in Symbiobacterium thermophilum (strain DSM 24528 / JCM 14929 / IAM 14863 / T).